A 429-amino-acid chain; its full sequence is Arrestin-related trafficking adapter 10 (429 aa).

This sequence belongs to the ART10 family.

It localises to the cytoplasm. Functionally, may regulate endocytosis by recruiting RSP5 ubiquitin ligase activity to specific plasma membrane proteins in response to extracellular stimuli. In Lachancea thermotolerans (strain ATCC 56472 / CBS 6340 / NRRL Y-8284) (Yeast), this protein is Arrestin-related trafficking adapter 10 (ART10).